The following is a 155-amino-acid chain: SsrA-binding protein (155 aa).

It belongs to the SmpB family.

The protein localises to the cytoplasm. Required for rescue of stalled ribosomes mediated by trans-translation. Binds to transfer-messenger RNA (tmRNA), required for stable association of tmRNA with ribosomes. tmRNA and SmpB together mimic tRNA shape, replacing the anticodon stem-loop with SmpB. tmRNA is encoded by the ssrA gene; the 2 termini fold to resemble tRNA(Ala) and it encodes a 'tag peptide', a short internal open reading frame. During trans-translation Ala-aminoacylated tmRNA acts like a tRNA, entering the A-site of stalled ribosomes, displacing the stalled mRNA. The ribosome then switches to translate the ORF on the tmRNA; the nascent peptide is terminated with the 'tag peptide' encoded by the tmRNA and targeted for degradation. The ribosome is freed to recommence translation, which seems to be the essential function of trans-translation. This is SsrA-binding protein from Bordetella parapertussis (strain 12822 / ATCC BAA-587 / NCTC 13253).